Consider the following 93-residue polypeptide: Mammaglobin-A (93 aa).

Residues 1-18 form the signal peptide; sequence MKLLMVLMLAALSQHCYA. Asparagine 53 and asparagine 68 each carry an N-linked (GlcNAc...) asparagine glycan.

This sequence belongs to the secretoglobin family. Lipophilin subfamily. In terms of tissue distribution, mammary gland specific. Over-expressed in breast cancer.

It is found in the secreted. The chain is Mammaglobin-A (SCGB2A2) from Homo sapiens (Human).